The primary structure comprises 116 residues: Hydrogenase maturation factor HypA (116 aa).

His-2 is a binding site for Ni(2+). Residues Cys-73, Cys-76, Cys-89, and Cys-92 each coordinate Zn(2+).

It belongs to the HypA/HybF family.

Functionally, involved in the maturation of [NiFe] hydrogenases. Required for nickel insertion into the metal center of the hydrogenase. The polypeptide is Hydrogenase maturation factor HypA (Chlorobium limicola (strain DSM 245 / NBRC 103803 / 6330)).